The sequence spans 576 residues: K(+)/H(+) antiporter NhaP2 (576 aa).

13 helical membrane-spanning segments follow: residues 6–26, 34–54, 58–78, 87–107, 109–129, 163–183, 185–205, 219–239, 242–262, 271–291, 299–319, 335–355, and 359–379; these read INSFFLIGALLTAVSVLLSPM, ILLIFLAVGILAGEDGPGGIL, YSTAYLVSNLALAIILLDGGM, VALWPALSLATFGVAITTSIT, MMAAWLFDLHWLQGLLVGAIV, PMAVFLTVTLIAILANVDTEM, FSFMFISFIKQFGLGICLGLG, LADGLYSILVLSGGLIIYAAS, LGGSGILSIYLVGLFLGNKPT, VLDGMTWVSQIGMFLVLGLLL, ILIPGFALAFGMILFARPVAV, WFISWVGLRGAVPIILAVFPM, and LPGAQLYFNLAFFVVLVSLLV. Residues 405–486 form the RCK C-terminal domain; it reads SGVEIYPSSE…LEALSNLFSQ (82 aa).

Belongs to the monovalent cation:proton antiporter 1 (CPA1) transporter (TC 2.A.36) family. NhaP2 subfamily.

Its subcellular location is the cell inner membrane. It catalyses the reaction K(+)(in) + H(+)(out) = K(+)(out) + H(+)(in). K(+)/H(+) antiporter that extrudes potassium in exchange for external protons and maintains the internal concentration of potassium under toxic levels. The protein is K(+)/H(+) antiporter NhaP2 of Shewanella baltica (strain OS223).